The sequence spans 102 residues: uncharacterized protein (102 aa).

A helical transmembrane segment spans residues 7-23 (IVFVSCVILGLAACSSQ).

The protein resides in the membrane. This is an uncharacterized protein from Haemophilus influenzae (strain ATCC 51907 / DSM 11121 / KW20 / Rd).